Consider the following 376-residue polypeptide: Succinyl-diaminopimelate desuccinylase (376 aa).

Histidine 67 is a Zn(2+) binding site. Residue aspartate 69 is part of the active site. Position 100 (aspartate 100) interacts with Zn(2+). Glutamate 134 functions as the Proton acceptor in the catalytic mechanism. The Zn(2+) site is built by glutamate 135, glutamate 163, and histidine 349.

It belongs to the peptidase M20A family. DapE subfamily. As to quaternary structure, homodimer. Zn(2+) serves as cofactor. It depends on Co(2+) as a cofactor.

The catalysed reaction is N-succinyl-(2S,6S)-2,6-diaminopimelate + H2O = (2S,6S)-2,6-diaminopimelate + succinate. The protein operates within amino-acid biosynthesis; L-lysine biosynthesis via DAP pathway; LL-2,6-diaminopimelate from (S)-tetrahydrodipicolinate (succinylase route): step 3/3. Functionally, catalyzes the hydrolysis of N-succinyl-L,L-diaminopimelic acid (SDAP), forming succinate and LL-2,6-diaminopimelate (DAP), an intermediate involved in the bacterial biosynthesis of lysine and meso-diaminopimelic acid, an essential component of bacterial cell walls. The chain is Succinyl-diaminopimelate desuccinylase from Shewanella denitrificans (strain OS217 / ATCC BAA-1090 / DSM 15013).